Here is a 405-residue protein sequence, read N- to C-terminus: Aspartokinase (405 aa).

ACT domains are found at residues 267-344 and 345-405; these read VSME…AKVS and IVGV…QLDQ.

Belongs to the aspartokinase family.

It carries out the reaction L-aspartate + ATP = 4-phospho-L-aspartate + ADP. It participates in amino-acid biosynthesis; L-lysine biosynthesis via DAP pathway; (S)-tetrahydrodipicolinate from L-aspartate: step 1/4. Its pathway is amino-acid biosynthesis; L-methionine biosynthesis via de novo pathway; L-homoserine from L-aspartate: step 1/3. It functions in the pathway amino-acid biosynthesis; L-threonine biosynthesis; L-threonine from L-aspartate: step 1/5. The polypeptide is Aspartokinase (lysC) (Helicobacter pylori (strain ATCC 700392 / 26695) (Campylobacter pylori)).